We begin with the raw amino-acid sequence, 2036 residues long: Putative mediator of RNA polymerase II transcription subunit 24 (2036 aa).

Disordered stretches follow at residues 51–70 (NNNN…NNNV), 159–184 (DNIE…NNIG), 212–451 (SPSP…QTTT), 501–580 (KSVN…NNNN), 754–840 (NLKN…SHQK), 928–1124 (NNNN…NKDL), 1375–1419 (NNKN…NNNN), and 1565–1608 (NSSA…NGDT). Positions 212-229 (SPSPSSSSSSSTSPSSQQ) are enriched in low complexity. Residues 260–270 (EIMKVKEEPIK) are compositionally biased toward basic and acidic residues. Composition is skewed to low complexity over residues 273 to 291 (TTTT…STTT), 300 to 311 (TNGNGEETTITT), 387 to 451 (QPQP…QTTT), 501 to 539 (KSVN…NSNN), 547 to 580 (NNNN…NNNN), and 754 to 770 (NLKN…NSNG). Residues 505-584 (NNNNNNNNNN…NNNNNNINNI (80 aa)) adopt a coiled-coil conformation. Polar residues predominate over residues 778-787 (GSSTDGSNKL). 2 stretches are compositionally biased toward low complexity: residues 788 to 808 (SSTN…LNGN) and 928 to 943 (NNNN…NNKN). The stretch at 943 to 977 (NKNSKKSNNKNKNNKNNNKKNKNNNNNNNNNNNNN) forms a coiled coil. Positions 944–964 (KNSKKSNNKNKNNKNNNKKNK) are enriched in basic residues. Composition is skewed to low complexity over residues 965–999 (NNNN…NNNN), 1017–1118 (NNNN…NNNN), 1385–1419 (SNNS…NNNN), 1565–1584 (NSSA…LPKS), and 1594–1608 (SSNT…NGDT). Positions 1915 to 1968 (SKNQSLKKKQKLKQKKQQHNNNNGGEYNIDQDHIEQIQQQQQQYQKQQQQRKDE) form a coiled coil.

Belongs to the Mediator complex subunit 24 family. In terms of assembly, component of the Mediator complex.

The protein resides in the nucleus. Component of the Mediator complex, a coactivator involved in the regulated transcription of nearly all RNA polymerase II-dependent genes. Mediator functions as a bridge to convey information from gene-specific regulatory proteins to the basal RNA polymerase II transcription machinery. Mediator is recruited to promoters by direct interactions with regulatory proteins and serves as a scaffold for the assembly of a functional preinitiation complex with RNA polymerase II and the general transcription factors. The polypeptide is Putative mediator of RNA polymerase II transcription subunit 24 (med24) (Dictyostelium discoideum (Social amoeba)).